The primary structure comprises 212 residues: Ribosomal RNA small subunit methyltransferase G (212 aa).

S-adenosyl-L-methionine contacts are provided by residues Gly-73, 127–128 (IE), and Arg-143.

The protein belongs to the methyltransferase superfamily. RNA methyltransferase RsmG family.

The protein localises to the cytoplasm. The enzyme catalyses guanosine(527) in 16S rRNA + S-adenosyl-L-methionine = N(7)-methylguanosine(527) in 16S rRNA + S-adenosyl-L-homocysteine. Its function is as follows. Specifically methylates the N7 position of guanine in position 527 of 16S rRNA. In Methylobacterium nodulans (strain LMG 21967 / CNCM I-2342 / ORS 2060), this protein is Ribosomal RNA small subunit methyltransferase G.